The following is a 603-amino-acid chain: Ankyrin repeat and LEM domain-containing protein 2 homolog (603 aa).

The helical; Signal-anchor for type III membrane protein transmembrane segment at 2–22 (GRKSAILAVILAIIYFRSNFS) threads the bilayer. 2 ANK repeats span residues 161–190 (FRYN…NIDF) and 221–250 (NSDT…TDRT). Disordered stretches follow at residues 446–465 (ISEN…DDDD) and 505–538 (LPPP…PPPT). Positions 456–465 (DSADDEDDDD) are enriched in acidic residues.

The protein belongs to the ANKLE2 family. As to quaternary structure, interacts with baf-1. Interacts with protein phosphatase 2A (PP2A) components.

It localises to the nucleus membrane. In terms of biological role, involved in mitotic nuclear envelope reassembly by promoting dephosphorylation of baf-1 during mitotic exit. Coordinates the control of baf-1 dephosphorylation by inhibiting VRK1 kinase and promoting dephosphorylation of baf-1 by protein phosphatase 2A (PP2A), thereby facilitating nuclear envelope assembly. It is unclear whether it acts as a real PP2A regulatory subunit or whether it is involved in recruitment of the PP2A complex. The chain is Ankyrin repeat and LEM domain-containing protein 2 homolog (lem-4) from Caenorhabditis elegans.